We begin with the raw amino-acid sequence, 716 residues long: Epidermal growth factor receptor kinase substrate 8-like protein 1 (716 aa).

Residues 35–164 enclose the PTB domain; that stretch reads QYHVNHLVTF…LQNYRSGRGE (130 aa). 5 disordered regions span residues 175–194, 203–249, 404–472, 528–582, and 600–628; these read EELR…QRRP, VEPS…GPEL, PGVE…ETES, YNIL…SLDP, and SRLA…PRSE. At serine 182 the chain carries Phosphoserine. At threonine 187 the chain carries Phosphothreonine. Residues 435 to 446 show a composition bias toward basic and acidic residues; that stretch reads PWEDPVEKQLQH. The segment covering 453 to 464 has biased composition (polar residues); sequence QSAPQVAVNGQQ. The region spanning 477–536 is the SH3 domain; that stretch reads KARKWVLCNYDFQARNGSELSVKHRDVLEVLDDRRKWWKVRDHQGQEGYVPYNILTPHPG. The span at 553-563 shows a compositional bias: pro residues; sequence TPPPPPAPAPA. A coiled-coil region spans residues 682 to 713; sequence VQRALLEDREKVSELEAVMEKQKKKVEGETKT.

It belongs to the EPS8 family. In terms of assembly, interacts with ABI1. Part of a complex that contains SOS1, ABI1 and EPS8L2. Associates with F-actin. As to expression, detected in placenta, skin, mammary gland, bone marrow and stomach.

The protein localises to the cytoplasm. Functionally, stimulates guanine exchange activity of SOS1. May play a role in membrane ruffling and remodeling of the actin cytoskeleton. The protein is Epidermal growth factor receptor kinase substrate 8-like protein 1 (Eps8l1) of Mus musculus (Mouse).